A 312-amino-acid chain; its full sequence is Ribosomal RNA small subunit methyltransferase H (312 aa).

Residues 30 to 32 (GGH), aspartate 50, phenylalanine 80, aspartate 98, and glutamine 105 each bind S-adenosyl-L-methionine.

The protein belongs to the methyltransferase superfamily. RsmH family.

The protein localises to the cytoplasm. The catalysed reaction is cytidine(1402) in 16S rRNA + S-adenosyl-L-methionine = N(4)-methylcytidine(1402) in 16S rRNA + S-adenosyl-L-homocysteine + H(+). Functionally, specifically methylates the N4 position of cytidine in position 1402 (C1402) of 16S rRNA. The polypeptide is Ribosomal RNA small subunit methyltransferase H (Lawsonia intracellularis (strain PHE/MN1-00)).